A 237-amino-acid chain; its full sequence is Phosphatidylserine decarboxylase proenzyme (237 aa).

Ser206 acts as the Schiff-base intermediate with substrate; via pyruvic acid in catalysis. Position 206 is a pyruvic acid (Ser); by autocatalysis (Ser206).

Belongs to the phosphatidylserine decarboxylase family. PSD-A subfamily. Heterodimer of a large membrane-associated beta subunit and a small pyruvoyl-containing alpha subunit. Pyruvate serves as cofactor. Is synthesized initially as an inactive proenzyme. Formation of the active enzyme involves a self-maturation process in which the active site pyruvoyl group is generated from an internal serine residue via an autocatalytic post-translational modification. Two non-identical subunits are generated from the proenzyme in this reaction, and the pyruvate is formed at the N-terminus of the alpha chain, which is derived from the carboxyl end of the proenzyme. The post-translation cleavage follows an unusual pathway, termed non-hydrolytic serinolysis, in which the side chain hydroxyl group of the serine supplies its oxygen atom to form the C-terminus of the beta chain, while the remainder of the serine residue undergoes an oxidative deamination to produce ammonia and the pyruvoyl prosthetic group on the alpha chain.

Its subcellular location is the cell membrane. The enzyme catalyses a 1,2-diacyl-sn-glycero-3-phospho-L-serine + H(+) = a 1,2-diacyl-sn-glycero-3-phosphoethanolamine + CO2. It functions in the pathway phospholipid metabolism; phosphatidylethanolamine biosynthesis; phosphatidylethanolamine from CDP-diacylglycerol: step 2/2. Catalyzes the formation of phosphatidylethanolamine (PtdEtn) from phosphatidylserine (PtdSer). The protein is Phosphatidylserine decarboxylase proenzyme of Mycobacteroides abscessus (strain ATCC 19977 / DSM 44196 / CCUG 20993 / CIP 104536 / JCM 13569 / NCTC 13031 / TMC 1543 / L948) (Mycobacterium abscessus).